The sequence spans 687 residues: Adhesion G-protein coupled receptor G1 (687 aa).

Positions 1 to 25 (MTAQSLLQTTLFLLSLLFLVQGAHG) are cleaved as a signal peptide. Residue 26–33 (RGHREDFR) participates in heparin binding. Over 26–402 (RGHREDFRFC…VEVDAVHKHY (377 aa)) the chain is Extracellular. 2 disulfide bridges follow: cysteine 35-cysteine 91 and cysteine 121-cysteine 177. 3 N-linked (GlcNAc...) asparagine glycosylation sites follow: asparagine 39, asparagine 148, and asparagine 171. 190–200 (LKHPQKASRRP) lines the heparin pocket. A GAIN-B domain is found at 224 to 395 (DTVSFEEDRI…AVLMVSSVEV (172 aa)). N-linked (GlcNAc...) asparagine glycosylation is found at asparagine 234, asparagine 303, asparagine 324, and asparagine 341. Intrachain disulfides connect cysteine 346–cysteine 377 and cysteine 366–cysteine 379. Positions 346–395 (CVFWVEDPTLSSPGHWSSAGCETVRRETQTSCLCNHLTYFAVLMVSSVEV) are GPS. Positions 384–397 (YFAVLMVSSVEVDA) are stachel. The helical transmembrane segment at 403–423 (LSLLSYVGCVVSALACVVTIA) threads the bilayer. Over 424–442 (AYLCSRRKPRDYTIKVHMN) the chain is Cytoplasmic. The helical transmembrane segment at 443–463 (LLLAVFLLDTSFLLSEPVALT) threads the bilayer. Residues 464-470 (GSEAGCR) lie on the Extracellular side of the membrane. Residues 471–491 (ASAIFLHFSLLACLSWMGLEG) traverse the membrane as a helical segment. At 492–512 (YNLYRLVVEVFGTYVPGYLLK) the chain is on the cytoplasmic side. The helical transmembrane segment at 513–533 (LSAMGWGFPIFLVTLVALVDV) threads the bilayer. Topologically, residues 534-570 (DNYGPIILAVHRTPEGVIYPSMCWIRDSLVSYITNLG) are extracellular. The helical transmembrane segment at 571–591 (LFSLVFLFNMAMLATMVVQIL) threads the bilayer. Residues 592 to 603 (RLRPHTQKWSHV) are Cytoplasmic-facing. The chain crosses the membrane as a helical span at residues 604–624 (LTLLGLSLVLGLPWALIFFSF). Topologically, residues 625 to 630 (ASGTFQ) are extracellular. Residues 631-651 (LVILYLFSIITSFQGFLIFIW) traverse the membrane as a helical segment. Over 652–687 (YWSMRLQARGGPSPLKSNSDSARLPISSGSTSSSRI) the chain is Cytoplasmic. A disordered region spans residues 664-687 (SPLKSNSDSARLPISSGSTSSSRI). Over residues 678–687 (SSGSTSSSRI) the composition is skewed to low complexity.

The protein belongs to the G-protein coupled receptor 2 family. LN-TM7 subfamily. As to quaternary structure, heterodimer of 2 chains generated by proteolytic processing; the large extracellular N-terminal fragment (ADGRG1 NT) and the membrane-bound C-terminal fragment (ADGRG1-CT) predominantly remain associated and non-covalently linked. ADGRG1 NT self-associates in a trans-trans manner; the homophilic interaction enhances receptor signaling. Interacts with TGM2. Interacts with heparin; leading to the reduction of ADGRG1 shedding. Interacts with COL3A1. Part of a GPCR-tetraspanin complex at least consisting of ADGRG1, CD81, eventually CD9, and GNA11 in which CD81 is enhancing the association of ADGRG1 with GNA11. Post-translationally, autoproteolytically cleaved into 2 fragments; the large extracellular N-terminal fragment (ADGRG1 NT) and the membrane-bound C-terminal fragment (ADGRG1 CT) predominantly remain associated and non-covalently linked. Shedding to yield the secreted ADGRG1 N-terminal fragment seems to involve metalloprotease(s). In terms of processing, ubiquitinated. Undergoes polyubiquitination upon activation.

The protein localises to the cell membrane. It is found in the secreted. The protein resides in the membrane raft. With respect to regulation, forms a heterodimer of 2 chains generated by proteolytic processing that remain associated through non-covalent interactions mediated by the GAIN-B domain. In the inactivated receptor, the Stachel sequence (also named stalk) is embedded in the GAIN-B domain, where it adopts a beta-strand conformation. On activation, the Stachel moves into the 7 transmembrane region and adopts a twisted hook-shaped configuration that forms contacts within the receptor, leading to coupling of a G-alpha protein, which activates signaling. The cleaved GAIN-B and N-terminal domains can then dissociate from the rest of the receptor. Functionally, adhesion G-protein coupled receptor (aGPCR) for steroid hormone 17alpha-hydroxypregnenolone (17-OH), which is involved in cell adhesion and cell-cell interactions. Ligand binding causes a conformation change that triggers signaling via guanine nucleotide-binding proteins (G proteins) and modulates the activity of downstream effectors, such as RhoA pathway. ADGRG1 is coupled to G(12) and/or G(13) G proteins (GNA12 and GNA13, respectively) and mediates the activation Rho small GTPases. Acts as a potent suppressor of ferroptosis: binding to 17-OH-binding initiates signaling that down-regulates CD36 and alleviates ferroptosis-induced liver injury. Ligand-binding also induces cell adhesion activity via association with proteins such as collagen III/COL3A1 and TGM2. Mediates cell matrix adhesion in developing neurons and hematopoietic stem cells. Involved in cortical development, specifically in maintenance of the pial basement membrane integrity and in cortical lamination: association with COL3A1 in the developing brain inhibits neuronal migration via activation of the RhoA pathway. Together with TGM2, acts as a regulator of myelination and myelin repair in oligodendrocyte precursor cells. Acts as a hemostatic sensor of shear force: G protein-coupled receptor signaling is activated in response to shear force in platelets, promoting G(13) G protein signaling, and platelet shape change and aggregation in a COL3A1-dependent manner. Acts as an inhibitor of VEGFA production thereby inhibiting angiogenesis through a signaling pathway mediated by PRKCA. Plays a role in the maintenance of hematopoietic stem cells in bone marrow niche. Plays an essential role in testis development. The chain is Adhesion G-protein coupled receptor G1 (ADGRG1) from Pan troglodytes (Chimpanzee).